The sequence spans 146 residues: Transcriptional repressor NrdR (146 aa).

The segment at 3-34 (CPFCQNPDTKVIDTRISDDGHSIRRRRVCPKC) is a zinc-finger region. In terms of domain architecture, ATP-cone spans 46-136 (LLVTKRSGGV…VYQNFAGLED (91 aa)).

This sequence belongs to the NrdR family. Zn(2+) is required as a cofactor.

Functionally, negatively regulates transcription of bacterial ribonucleotide reductase nrd genes and operons by binding to NrdR-boxes. In Bifidobacterium longum (strain NCC 2705), this protein is Transcriptional repressor NrdR.